The primary structure comprises 452 residues: GTPase Obg (452 aa).

Residues 1-158 (MFIDRAKIYV…KWIVLELKVM (158 aa)) enclose the Obg domain. 2 disordered regions span residues 66–87 (GKRGEHGQGSNQHGKSGQDKVI) and 117–143 (AEGGRGGRGNTRFANPKNKAPRFSEDG). The OBG-type G domain maps to 159 to 338 (AEVGLIGYPN…LLDFVAEKVA (180 aa)). Residues 165 to 172 (GYPNVGKS), 190 to 194 (FTTLN), 212 to 215 (DIPG), 282 to 285 (NKMD), and 319 to 321 (SAA) each bind GTP. Residues Ser-172 and Thr-192 each contribute to the Mg(2+) site. The OCT domain occupies 376 to 452 (IEEKPKSDFG…KIGNVEFEYQ (77 aa)).

This sequence belongs to the TRAFAC class OBG-HflX-like GTPase superfamily. OBG GTPase family. In terms of assembly, monomer. It depends on Mg(2+) as a cofactor.

It is found in the cytoplasm. In terms of biological role, an essential GTPase which binds GTP, GDP and possibly (p)ppGpp with moderate affinity, with high nucleotide exchange rates and a fairly low GTP hydrolysis rate. Plays a role in control of the cell cycle, stress response, ribosome biogenesis and in those bacteria that undergo differentiation, in morphogenesis control. The chain is GTPase Obg from Natranaerobius thermophilus (strain ATCC BAA-1301 / DSM 18059 / JW/NM-WN-LF).